We begin with the raw amino-acid sequence, 268 residues long: Imidazole glycerol phosphate synthase subunit HisF (268 aa).

Active-site residues include D12 and D131.

It belongs to the HisA/HisF family. Heterodimer of HisH and HisF.

It localises to the cytoplasm. It carries out the reaction 5-[(5-phospho-1-deoxy-D-ribulos-1-ylimino)methylamino]-1-(5-phospho-beta-D-ribosyl)imidazole-4-carboxamide + L-glutamine = D-erythro-1-(imidazol-4-yl)glycerol 3-phosphate + 5-amino-1-(5-phospho-beta-D-ribosyl)imidazole-4-carboxamide + L-glutamate + H(+). It participates in amino-acid biosynthesis; L-histidine biosynthesis; L-histidine from 5-phospho-alpha-D-ribose 1-diphosphate: step 5/9. IGPS catalyzes the conversion of PRFAR and glutamine to IGP, AICAR and glutamate. The HisF subunit catalyzes the cyclization activity that produces IGP and AICAR from PRFAR using the ammonia provided by the HisH subunit. This chain is Imidazole glycerol phosphate synthase subunit HisF, found in Methanoregula boonei (strain DSM 21154 / JCM 14090 / 6A8).